The sequence spans 70 residues: Conotoxin ArMKLT2-0111 (70 aa).

Positions 1 to 22 are cleaved as a signal peptide; sequence MKLTCVLIIAVLFLTACQLTTG. The propeptide occupies 23-40; the sequence is EQKDHALRSTDKNSKLTR. Q41 carries the pyrrolidone carboxylic acid modification. 3 disulfides stabilise this stretch: C42–C56, C49–C60, and C55–C67.

The protein belongs to the conotoxin O1 superfamily. In terms of tissue distribution, expressed by the venom duct.

The protein resides in the secreted. The polypeptide is Conotoxin ArMKLT2-0111 (Conus arenatus (Sand-dusted cone)).